We begin with the raw amino-acid sequence, 337 residues long: 1-aminocyclopropane-1-carboxylate deaminase (337 aa).

An N6-(pyridoxal phosphate)lysine modification is found at Lys-50. The Nucleophile role is filled by Ser-77.

This sequence belongs to the ACC deaminase/D-cysteine desulfhydrase family. In terms of assembly, homotrimer. Pyridoxal 5'-phosphate serves as cofactor.

It catalyses the reaction 1-aminocyclopropane-1-carboxylate + H2O = 2-oxobutanoate + NH4(+). In terms of biological role, catalyzes a cyclopropane ring-opening reaction, the irreversible conversion of 1-aminocyclopropane-1-carboxylate (ACC) to ammonia and alpha-ketobutyrate. Allows growth on ACC as a nitrogen source. The polypeptide is 1-aminocyclopropane-1-carboxylate deaminase (Methylobacterium sp. (strain 4-46)).